The sequence spans 133 residues: Holo-[acyl-carrier-protein] synthase (133 aa).

Residues D8 and E58 each coordinate Mg(2+).

Belongs to the P-Pant transferase superfamily. AcpS family. Requires Mg(2+) as cofactor.

Its subcellular location is the cytoplasm. It catalyses the reaction apo-[ACP] + CoA = holo-[ACP] + adenosine 3',5'-bisphosphate + H(+). In terms of biological role, transfers the 4'-phosphopantetheine moiety from coenzyme A to a Ser of acyl-carrier-protein. In Erythrobacter litoralis (strain HTCC2594), this protein is Holo-[acyl-carrier-protein] synthase.